Here is an 860-residue protein sequence, read N- to C-terminus: M-phase phosphoprotein 8 (860 aa).

Met1 carries the post-translational modification N-acetylmethionine. Residues Ser51, Ser85, Ser136, and Ser138 each carry the phosphoserine modification. The Chromo domain maps to 59–118; that stretch reads FEVEKILDMKTEGGKVLYKVRWKGYTSDDDTWEPEIHLEDCKEVLLEFRKKIAENKAKAV. Residues 80–87 are histone H3K9me3 binding; that stretch reads WKGYTSDD. Polar residues predominate over residues 129-141; that stretch reads NDIFEANSDSDQQ. The disordered stretch occupies residues 129 to 191; the sequence is NDIFEANSDS…SKPDLESSLE (63 aa). Thr144 is subject to Phosphothreonine. A phosphoserine; by CDK1 mark is found at Ser149 and Ser164. 2 stretches are compositionally biased toward basic and acidic residues: residues 159-169 and 177-186; these read QREEKSPDDLK and KLKDKSKPDL. Phosphoserine is present on residues Ser188, Ser189, and Ser192. Over residues 206-249 the composition is skewed to basic and acidic residues; that stretch reads AKEELKESKKPKKDEVKETKELKKVKKGEIRDLKTKTREDPKEN. The disordered stretch occupies residues 206-440; the sequence is AKEELKESKK…GRKEPKGLKT (235 aa). Low complexity predominate over residues 259 to 268; sequence ESQVESESSV. Residues Ser266, Ser272, and Ser279 each carry the phosphoserine modification. A compositionally biased stretch (basic and acidic residues) spans 280-314; sequence EGLHSDSREEKQNTKSARERAGQDMGLEHGFEKPL. A Phosphoserine modification is found at Ser319. Thr334 is subject to Phosphothreonine; by CDK1. Positions 336–377 are enriched in basic and acidic residues; sequence RKAEDTRENRKLENKNAFLEKKTVPKKQRNQDRSKSAAELEK. Thr385 is modified (phosphothreonine; by CDK1). Ser392, Ser400, and Ser403 each carry phosphoserine. The span at 408–440 shows a compositional bias: basic and acidic residues; the sequence is KETKRNESKEKYQKRHDSDKEEKGRKEPKGLKT. The interval 431 to 560 is interaction with humanin; that stretch reads GRKEPKGLKT…HLDGKDENFA (130 aa). The residue at position 454 (Thr454) is a Phosphothreonine. The interval 458-496 is disordered; the sequence is KNDVSENNRKREEIPLDFKTIDDHKTKENKQSLKERRNT. ANK repeat units follow at residues 600–629, 633–662, 666–695, and 699–728; these read SGMTLVMLAAAGGQDDLLRLLITKGAKVNG, NGTTALIHAAEKNFLTTVAILLEAGAFVNV, NGETALMKACKRGNSDIVRLVIECGADCNI, and HQNSALHFAKQSNNVLVYDLLKNHLETLSR.

As to quaternary structure, homodimer. Interacts (via chromo domain) with histone H3K9me3. Has the highest affinity for H3K9me3, and lesser affinity for H3K9me2 and H3K9me1. Component of the HUSH complex; at least composed of TASOR, PPHLN1 and MPHOSPH8. Interacts with DNMT3, EHMT1 and SETDB1. Interacts with MORC2; the interaction associateS MORC2 with the HUSH complex which recruits MORC2 to heterochromatic loci. Interacts with ZNF638; leading to recruitment of the HUSH complex to unintegrated retroviral DNA. Interacts with TASOR. Interacts with humanin. In terms of processing, phosphorylated in M (mitotic) phase. Phosphorylation by CDK1 promotes dissociation from chromatin.

Its subcellular location is the nucleus. It localises to the chromosome. Its function is as follows. Heterochromatin component that specifically recognizes and binds methylated 'Lys-9' of histone H3 (H3K9me) and promotes recruitment of proteins that mediate epigenetic repression. Mediates recruitment of the HUSH complex to H3K9me3 sites: the HUSH complex is recruited to genomic loci rich in H3K9me3 and is required to maintain transcriptional silencing by promoting recruitment of SETDB1, a histone methyltransferase that mediates further deposition of H3K9me3, as well as MORC2. Binds H3K9me and promotes DNA methylation by recruiting DNMT3A to target CpG sites; these can be situated within the coding region of the gene. Mediates down-regulation of CDH1 expression. Also represses L1 retrotransposons in collaboration with MORC2 and, probably, SETDB1, the silencing is dependent of repressive epigenetic modifications, such as H3K9me3 mark. Silencing events often occur within introns of transcriptionally active genes, and lead to the down-regulation of host gene expression. The HUSH complex is also involved in the silencing of unintegrated retroviral DNA by being recruited by ZNF638: some part of the retroviral DNA formed immediately after infection remains unintegrated in the host genome and is transcriptionally repressed. The chain is M-phase phosphoprotein 8 from Homo sapiens (Human).